Reading from the N-terminus, the 39-residue chain is Bacteriocin lactococcin-G subunit alpha (39 aa).

In terms of assembly, bacteriocin activity requires interaction of alpha and beta peptides in a molar ratio of 7:1 or 8:1 respectively.

In terms of biological role, kills Lactococci. The polypeptide is Bacteriocin lactococcin-G subunit alpha (Lactococcus lactis subsp. lactis (Streptococcus lactis)).